We begin with the raw amino-acid sequence, 432 residues long: Neuronal pentraxin-1 (432 aa).

The N-terminal stretch at 1–22 (MLAGRAARTCALLALCLLGSRA) is a signal peptide. Residues 90–128 (ESQSTLDAGPGEARSGGGRKQPGSGKNTMGDLSRTPASE) are disordered. 2 N-linked (GlcNAc...) asparagine glycosylation sites follow: asparagine 154 and asparagine 193. Residues 226-428 (DKFQLTFPLR…GATKWTFEAC (203 aa)) form the Pentraxin (PTX) domain. Residues cysteine 256 and cysteine 316 are joined by a disulfide bond. Positions 280, 358, 359, 360, and 370 each coordinate Ca(2+).

In terms of assembly, homooligomer or heterooligomer (probably pentamer) with neuronal pentraxin receptor (NPTXR). Requires Ca(2+) as cofactor. Glycosylated. As to expression, cerebellum, hippocampus and cerebral cortex.

It localises to the secreted. It is found in the cytoplasmic vesicle. The protein localises to the secretory vesicle. Its subcellular location is the endoplasmic reticulum. In terms of biological role, may be involved in mediating uptake of synaptic material during synapse remodeling or in mediating the synaptic clustering of AMPA glutamate receptors at a subset of excitatory synapses. This is Neuronal pentraxin-1 (Nptx1) from Rattus norvegicus (Rat).